Consider the following 694-residue polypeptide: Outer dynein arm-docking complex subunit 1 (694 aa).

2 coiled-coil regions span residues 27-192 and 222-259; these read ELSR…RYLN and REEA…HLEQ. The interval 271–290 is disordered; that stretch reads RQPDPGVVQKEEQRAWETSE. Residues 339-418 adopt a coiled-coil conformation; the sequence is NFINEQNSEL…EKIKTDIQVL (80 aa). Disordered regions lie at residues 531-550 and 571-694; these read QDEE…TLSS and SILS…RGYN. Residues S536, S542, S543, and S545 each carry the phosphoserine modification. Over residues 628-642 the composition is skewed to low complexity; the sequence is TSSSSYLGSTGYLET. The segment covering 655-672 has biased composition (polar residues); the sequence is SQSMGSEMSRGFSSGSGQ. Low complexity predominate over residues 673-687; that stretch reads TSSAAPASRPSSATS.

It belongs to the ODA1/DCC2 family. Component of the outer dynein arm-docking complex along with ODAD2, ODAD3, ODAD4 and CLXN. Interacts with ODAD3. Interacts with ODAD4; this interaction may facilitate the recruitment and/or attachment of outer dynein arm docking complex proteins,including ODAD1, ODAD3, and ODAD4 to ciliary axonemes. Interacts with DNAH9. Interacts with MNS1. Interacts with PIERCE1 and PIERCE2; the interactions link the outer dynein arms docking complex (ODA-DC) to the internal microtubule inner proteins (MIP) in cilium axoneme.

The protein localises to the cytoplasm. The protein resides in the cytoskeleton. It is found in the cilium axoneme. Its function is as follows. Component of the outer dynein arm-docking complex that mediates outer dynein arms (ODA) binding onto the doublet microtubule. Involved in mediating assembly of both ODAs and their axonemal docking complex onto ciliary microtubules. The chain is Outer dynein arm-docking complex subunit 1 (Odad1) from Rattus norvegicus (Rat).